We begin with the raw amino-acid sequence, 116 residues long: Co-chaperonin GroES (116 aa).

The protein belongs to the GroES chaperonin family. As to quaternary structure, heptamer of 7 subunits arranged in a ring. Interacts with the chaperonin GroEL.

The protein localises to the cytoplasm. In terms of biological role, together with the chaperonin GroEL, plays an essential role in assisting protein folding. The GroEL-GroES system forms a nano-cage that allows encapsulation of the non-native substrate proteins and provides a physical environment optimized to promote and accelerate protein folding. GroES binds to the apical surface of the GroEL ring, thereby capping the opening of the GroEL channel. In Mycoplasma pneumoniae (strain ATCC 29342 / M129 / Subtype 1) (Mycoplasmoides pneumoniae), this protein is Co-chaperonin GroES.